A 202-amino-acid chain; its full sequence is Ras-related protein RIC1 (202 aa).

Residues 15 to 23 (GDSGVGKSC), 33 to 40 (YLESYIST), 63 to 67 (DTAGQ), 121 to 124 (NKCD), and 151 to 153 (SAK) contribute to the GTP site. The Effector region motif lies at 37–45 (YISTIGVDF). Residues 174–185 (ASQPATNASKPA) show a composition bias toward polar residues. The interval 174 to 202 (ASQPATNASKPATVQMRGQPVAQQSSCCS) is disordered. Residues cysteine 200 and cysteine 201 are each lipidated (S-geranylgeranyl cysteine).

Belongs to the small GTPase superfamily. Rab family.

It is found in the cell membrane. In terms of biological role, possesses GTPase activity. The sequence is that of Ras-related protein RIC1 (RIC1) from Oryza sativa subsp. japonica (Rice).